Reading from the N-terminus, the 252-residue chain is Large ribosomal subunit protein uL29m (252 aa).

Residues 1 to 39 constitute a mitochondrion transit peptide; sequence MSTSTVIRPVARSLLQLRKAGNTPPAFLLPCLQSSSTTS. Residues 233–242 are compositionally biased toward acidic residues; sequence EDVLAEAEGE. A disordered region spans residues 233 to 252; it reads EDVLAEAEGEAEPKPAQVTA.

This sequence belongs to the universal ribosomal protein uL29 family. In terms of assembly, component of the mitochondrial large ribosomal subunit. Mature mitochondrial ribosomes consist of a small (37S) and a large (54S) subunit. The 37S subunit contains at least 33 different proteins and 1 molecule of RNA (15S). The 54S subunit contains at least 45 different proteins and 1 molecule of RNA (21S).

The protein resides in the mitochondrion. The chain is Large ribosomal subunit protein uL29m (mrpl4) from Botryotinia fuckeliana (strain B05.10) (Noble rot fungus).